An 88-amino-acid polypeptide reads, in one-letter code: Small ribosomal subunit protein bS20 (88 aa).

The interval 1–20 is disordered; sequence MPNIKSAIKRTKTNNERRAH.

It belongs to the bacterial ribosomal protein bS20 family.

In terms of biological role, binds directly to 16S ribosomal RNA. The chain is Small ribosomal subunit protein bS20 from Bacillus velezensis (strain DSM 23117 / BGSC 10A6 / LMG 26770 / FZB42) (Bacillus amyloliquefaciens subsp. plantarum).